The following is a 369-amino-acid chain: UDP-3-O-(3-hydroxymyristoyl)glucosamine N-acyltransferase (369 aa).

The active-site Proton acceptor is the His-240.

This sequence belongs to the transferase hexapeptide repeat family. LpxD subfamily. As to quaternary structure, homotrimer.

The enzyme catalyses a UDP-3-O-[(3R)-3-hydroxyacyl]-alpha-D-glucosamine + a (3R)-hydroxyacyl-[ACP] = a UDP-2-N,3-O-bis[(3R)-3-hydroxyacyl]-alpha-D-glucosamine + holo-[ACP] + H(+). It catalyses the reaction UDP-3-O-[(3R)-3-hydroxytetradecanoyl]-alpha-D-glucosamine + (3R)-hydroxytetradecanoyl-[ACP] = UDP-2-N,3-O-bis[(3R)-3-hydroxytetradecanoyl]-alpha-D-glucosamine + holo-[ACP] + H(+). It participates in glycolipid biosynthesis; lipid IV(A) biosynthesis; lipid IV(A) from (3R)-3-hydroxytetradecanoyl-[acyl-carrier-protein] and UDP-N-acetyl-alpha-D-glucosamine: step 3/6. In terms of biological role, catalyzes the N-acylation of UDP-3-O-(hydroxytetradecanoyl)glucosamine using 3-hydroxytetradecanoyl-ACP as the acyl donor. Is involved in the biosynthesis of lipid A, a phosphorylated glycolipid that anchors the lipopolysaccharide to the outer membrane of the cell. The sequence is that of UDP-3-O-(3-hydroxymyristoyl)glucosamine N-acyltransferase from Blochmanniella floridana.